The following is a 426-amino-acid chain: Phosphomethylpyrimidine synthase (426 aa).

Substrate is bound by residues asparagine 65, methionine 94, tyrosine 123, histidine 162, 184–186 (SRG), 225–228 (DGMR), and glutamate 264. Residue histidine 268 coordinates Zn(2+). Tyrosine 291 is a binding site for substrate. Histidine 332 lines the Zn(2+) pocket. The [4Fe-4S] cluster site is built by cysteine 408, cysteine 411, and cysteine 415.

Belongs to the ThiC family. It depends on [4Fe-4S] cluster as a cofactor.

It catalyses the reaction 5-amino-1-(5-phospho-beta-D-ribosyl)imidazole + S-adenosyl-L-methionine = 4-amino-2-methyl-5-(phosphooxymethyl)pyrimidine + CO + 5'-deoxyadenosine + formate + L-methionine + 3 H(+). The protein operates within cofactor biosynthesis; thiamine diphosphate biosynthesis. Functionally, catalyzes the synthesis of the hydroxymethylpyrimidine phosphate (HMP-P) moiety of thiamine from aminoimidazole ribotide (AIR) in a radical S-adenosyl-L-methionine (SAM)-dependent reaction. The sequence is that of Phosphomethylpyrimidine synthase from Methanococcus maripaludis (strain DSM 14266 / JCM 13030 / NBRC 101832 / S2 / LL).